Consider the following 393-residue polypeptide: MYLVGEALIGEGAELAHIDLLLGSKEGPVGSAFANAVSQLSMGHTPLLAVVRPNLLTKPATVIIPKVTLKDMEQVNEMFGPVQAAVAKAIADSLEEGAFKDIDIEGIAIIASAFVHPEAKDYNRIYRYNYGATKLALHRALDKFPDEKTLVYEKDRAAHGIMGFKVQRLWDPPYLQVAMDLVDMGKVAQVLKEVPQNDHVIIEAGTPLIKKFGLNVIGEIRKLRPNAFIIADMKILDTGNLEARMAADATADAVVVSGLAPTSTIEKAISEARKVGIYSIIDMLNVQNPAKLIEKLKVKPDIVELHRAIDTEETAHAWGDIPAMKKAAGGKLLVATAGGIRVEVVKDALKAGADILVVGRSITASKDIGHATDEFLDQLNREEIDQFRIMTDF.

A formaldehyde-activating enzyme region spans residues 1 to 161 (MYLVGEALIG…YEKDRAAHGI (161 aa)). The Proton donor role is filled by His-17. Substrate is bound by residues Asp-19, Leu-48, Lys-66, Thr-68, and Gln-83. The interval 162–393 (MGFKVQRLWD…IDQFRIMTDF (232 aa)) is 3-hexulose-6-phosphate synthase.

In the N-terminal section; belongs to the formaldehyde-activating enzyme family. This sequence in the C-terminal section; belongs to the HPS/KGPDC family. HPS subfamily.

The enzyme catalyses 5,6,7,8-tetrahydromethanopterin + formaldehyde = 5,10-methylenetetrahydromethanopterin + H2O. It catalyses the reaction D-ribulose 5-phosphate + formaldehyde = D-arabino-hex-3-ulose 6-phosphate. Its pathway is carbohydrate biosynthesis; D-ribose 5-phosphate biosynthesis. Functionally, catalyzes the condensation of formaldehyde with tetrahydromethanopterin (H(4)MPT) to 5,10-methylenetetrahydromethanopterin. In terms of biological role, catalyzes the reversible formation of ribulose-5-phosphate and formaldehyde from 3-hexulose-6-phosphate. This is Bifunctional enzyme Fae/Hps from Methanoregula boonei (strain DSM 21154 / JCM 14090 / 6A8).